Reading from the N-terminus, the 375-residue chain is Alcohol dehydrogenase E chain (375 aa).

Ser2 bears the N-acetylserine mark. Zn(2+) contacts are provided by Cys47, Ser49, His68, Cys98, Cys101, Cys104, Cys112, and Cys175. Ser49 and His68 together coordinate an alcohol. Ser49 is an NAD(+) binding site. NAD(+) is bound by residues 200 to 205, Asp224, Lys229, Val293, 293 to 295, Phe320, and Arg370; these read GLGGVG and VGV.

It belongs to the zinc-containing alcohol dehydrogenase family. Class-I subfamily. As to quaternary structure, dimer of identical or non-identical chains of two types (E and S) coded by 2 separate genes at different loci. The cofactor is Zn(2+).

The protein localises to the cytoplasm. The enzyme catalyses a primary alcohol + NAD(+) = an aldehyde + NADH + H(+). The catalysed reaction is a secondary alcohol + NAD(+) = a ketone + NADH + H(+). The chain is Alcohol dehydrogenase E chain from Equus caballus (Horse).